Reading from the N-terminus, the 181-residue chain is Protein OPG005 (181 aa).

In Vaccinia virus (strain Copenhagen) (VACV), this protein is Protein OPG005 (OPG005).